A 348-amino-acid polypeptide reads, in one-letter code: Phosphoribosylformylglycinamidine cyclo-ligase (348 aa).

It belongs to the AIR synthase family.

The protein resides in the cytoplasm. The enzyme catalyses 2-formamido-N(1)-(5-O-phospho-beta-D-ribosyl)acetamidine + ATP = 5-amino-1-(5-phospho-beta-D-ribosyl)imidazole + ADP + phosphate + H(+). It participates in purine metabolism; IMP biosynthesis via de novo pathway; 5-amino-1-(5-phospho-D-ribosyl)imidazole from N(2)-formyl-N(1)-(5-phospho-D-ribosyl)glycinamide: step 2/2. In Cereibacter sphaeroides (strain ATCC 17029 / ATH 2.4.9) (Rhodobacter sphaeroides), this protein is Phosphoribosylformylglycinamidine cyclo-ligase.